A 404-amino-acid chain; its full sequence is MKFPIYLDYAATCPADDRVAEKMMQYLTRDGIFGNPASRSHKFGWQAEEAVDIARNHIADLIGADSREIVFTSGATESDNLAIKGAAHFYQTKGKHIITCKTEHKAVLDTCRQLEREGFEVTYLAPKSDGLVDLDEFRAAIRPDTILASIMHVNNEIGVIQDIEAIGKICREHKVIFHVDATQSVGKLPINLAELPVDLMSMSGHKLYGPKGIGALYVRRKPRVRLEAIIHGGGHERGMRSGTLAVHQIVGMGEAYRICKEEMAEEMAHVTKLRDRLYNGLKDIEETYVNGSMEHRVGSNLNISFNFVEGESLMMALRDIAVSSGSACTSASLEPSYVLRALGLNDELAHSSIRFSLGRYTTEEEIDYTIDLVKSAVKKLRDLSPLWDMFKEGIDMSKIEWSAH.

Residues 75 to 76 (AT), Asn155, Gln183, and 203 to 205 (SGH) each bind pyridoxal 5'-phosphate. N6-(pyridoxal phosphate)lysine is present on Lys206. Thr243 provides a ligand contact to pyridoxal 5'-phosphate. Cys328 acts as the Cysteine persulfide intermediate in catalysis. Cys328 serves as a coordination point for [2Fe-2S] cluster.

It belongs to the class-V pyridoxal-phosphate-dependent aminotransferase family. NifS/IscS subfamily. As to quaternary structure, homodimer. Forms a heterotetramer with IscU, interacts with other sulfur acceptors. Pyridoxal 5'-phosphate is required as a cofactor.

It is found in the cytoplasm. The enzyme catalyses (sulfur carrier)-H + L-cysteine = (sulfur carrier)-SH + L-alanine. It participates in cofactor biosynthesis; iron-sulfur cluster biosynthesis. Master enzyme that delivers sulfur to a number of partners involved in Fe-S cluster assembly, tRNA modification or cofactor biosynthesis. Catalyzes the removal of elemental sulfur atoms from cysteine to produce alanine. Functions as a sulfur delivery protein for Fe-S cluster synthesis onto IscU, an Fe-S scaffold assembly protein, as well as other S acceptor proteins. This is Cysteine desulfurase IscS from Mannheimia succiniciproducens (strain KCTC 0769BP / MBEL55E).